A 23-amino-acid chain; its full sequence is Prolamin alpha-3 (23 aa).

The polypeptide is Prolamin alpha-3 (Dactylis glomerata (Orchard grass)).